The primary structure comprises 456 residues: Bis(5'-adenosyl)-triphosphatase enpp4 (456 aa).

Positions 1 to 18 (MFNMKILVIPLFWGLVTG) are cleaved as a signal peptide. The Extracellular portion of the chain corresponds to 19–410 (YKGNSSDSSA…DQWCINLPEA (392 aa)). Positions 37 and 73 each coordinate Zn(2+). Catalysis depends on threonine 73, which acts as the AMP-threonine intermediate. Asparagine 94 is a binding site for substrate. N-linked (GlcNAc...) asparagine glycosylation is present at asparagine 148. Tyrosine 157 contributes to the substrate binding site. An N-linked (GlcNAc...) asparagine glycan is attached at asparagine 169. Residues aspartate 192, histidine 196, aspartate 240, and histidine 241 each contribute to the Zn(2+) site. Aspartate 192 serves as a coordination point for substrate. A disulfide bridge links cysteine 257 with cysteine 290. Asparagine 279 and asparagine 330 each carry an N-linked (GlcNAc...) asparagine glycan. Histidine 339 serves as a coordination point for Zn(2+). An N-linked (GlcNAc...) asparagine glycan is attached at asparagine 389. Cysteine 397 and cysteine 404 form a disulfide bridge. A helical membrane pass occupies residues 411-431 (IGIVVSALLVLTMLTGLMIFM). The Cytoplasmic portion of the chain corresponds to 432 to 456 (RSRASTSRPFSRLQLQEDDDDPLID).

The protein belongs to the nucleotide pyrophosphatase/phosphodiesterase family. Zn(2+) serves as cofactor.

Its subcellular location is the cell membrane. The enzyme catalyses P(1),P(3)-bis(5'-adenosyl) triphosphate + H2O = AMP + ADP + 2 H(+). In terms of biological role, hydrolyzes extracellular Ap3A into AMP and ADP, and Ap4A into AMP and ATP. Ap3A and Ap4A are diadenosine polyphosphates thought to induce proliferation of vascular smooth muscle cells. Acts as a procoagulant, mediating platelet aggregation at the site of nascent thrombus via release of ADP from Ap3A and activation of ADP receptors. This Mus musculus (Mouse) protein is Bis(5'-adenosyl)-triphosphatase enpp4 (Enpp4).